The following is a 489-amino-acid chain: Diaminopimelate decarboxylase 2, chloroplastic (489 aa).

Residues 1-50 constitute a chloroplast transit peptide; it reads MAAVTQFLSQPSSIRGTLNQYQLNQTSLSRIPFLSLKSTLKPLKRLSVKA. Position 51 is an N-acetylalanine (A51). An N6-(pyridoxal phosphate)lysine modification is found at K130. Pyridoxal 5'-phosphate is bound by residues G309 and 345–348; that span reads EPGR. 3 residues coordinate substrate: R348, R384, and Y388. C416 functions as the Proton donor in the catalytic mechanism. 2 residues coordinate substrate: E417 and Y445. Y445 is a pyridoxal 5'-phosphate binding site.

It belongs to the Orn/Lys/Arg decarboxylase class-II family. LysA subfamily. In terms of assembly, homodimer. Pyridoxal 5'-phosphate is required as a cofactor.

Its subcellular location is the plastid. It is found in the chloroplast. It catalyses the reaction meso-2,6-diaminopimelate + H(+) = L-lysine + CO2. It participates in amino-acid biosynthesis; L-lysine biosynthesis via DAP pathway; L-lysine from DL-2,6-diaminopimelate: step 1/1. In terms of biological role, specifically catalyzes the decarboxylation of meso-diaminopimelate (meso-DAP) to L-lysine. The protein is Diaminopimelate decarboxylase 2, chloroplastic (LYSA2) of Arabidopsis thaliana (Mouse-ear cress).